We begin with the raw amino-acid sequence, 68 residues long: Beta-defensin 1 (68 aa).

A signal peptide spans 1–21 (MRTSYLLLFILCLVLCDMDSG). The propeptide occupies 22-32 (DTFLTGLGHRS). 3 disulfides stabilise this stretch: cysteine 37/cysteine 66, cysteine 44/cysteine 59, and cysteine 49/cysteine 67.

This sequence belongs to the beta-defensin family. As to quaternary structure, monomer. Homodimer.

The protein resides in the secreted. It localises to the membrane. Its function is as follows. Has bactericidal activity. May act as a ligand for C-C chemokine receptor CCR6. Positively regulates the sperm motility and bactericidal activity in a CCR6-dependent manner. Binds to CCR6 and triggers Ca2+ mobilization in the sperm which is important for its motility. The polypeptide is Beta-defensin 1 (DEFB1) (Saguinus oedipus (Cotton-top tamarin)).